Consider the following 244-residue polypeptide: Glucosamine-6-phosphate deaminase (244 aa).

Asp-67 functions as the Proton acceptor; for enolization step in the catalytic mechanism. Asn-136 functions as the For ring-opening step in the catalytic mechanism. The active-site Proton acceptor; for ring-opening step is the His-138. The active-site For ring-opening step is Glu-143.

Belongs to the glucosamine/galactosamine-6-phosphate isomerase family. NagB subfamily.

It catalyses the reaction alpha-D-glucosamine 6-phosphate + H2O = beta-D-fructose 6-phosphate + NH4(+). It functions in the pathway amino-sugar metabolism; N-acetylneuraminate degradation; D-fructose 6-phosphate from N-acetylneuraminate: step 5/5. Functionally, catalyzes the reversible isomerization-deamination of glucosamine 6-phosphate (GlcN6P) to form fructose 6-phosphate (Fru6P) and ammonium ion. In Clostridium botulinum (strain ATCC 19397 / Type A), this protein is Glucosamine-6-phosphate deaminase.